The following is a 324-amino-acid chain: Probable peptidylglycine alpha-hydroxylating monooxygenase 1 (324 aa).

A signal peptide spans 1–22 (MPRFYLLSSCALLAFATSFCNA). 2 disulfide bridges follow: Cys-41–Cys-85 and Cys-73–Cys-101. Residues His-66 and His-67 each coordinate Cu cation. His-142 is a binding site for Cu cation. Asn-182 carries N-linked (GlcNAc...) asparagine glycosylation. The Cu cation site is built by His-207, His-209, and Met-284. A disulfide bridge links Cys-264 with Cys-285.

This sequence belongs to the copper type II ascorbate-dependent monooxygenase family. Requires Cu(2+) as cofactor.

The protein resides in the secreted. It carries out the reaction a [peptide]-C-terminal glycine + 2 L-ascorbate + O2 = a [peptide]-C-terminal (2S)-2-hydroxyglycine + 2 monodehydro-L-ascorbate radical + H2O. Monooxygenase that catalyzes an essential reaction in C-terminal alpha-amidation of peptides. Produces an unstable peptidyl(2-hydroxyglycine) intermediate. C-terminal amidation of peptides such as neuropeptides is essential for full biological activity. This chain is Probable peptidylglycine alpha-hydroxylating monooxygenase 1, found in Caenorhabditis elegans.